The primary structure comprises 400 residues: Phosphoglycerate kinase (400 aa).

Residues 21 to 23, arginine 36, 59 to 62, arginine 119, and arginine 160 each bind substrate; these read DFN and HLGR. ATP is bound by residues lysine 211, glutamate 329, and 356 to 359; that span reads GGDS.

This sequence belongs to the phosphoglycerate kinase family. Monomer.

The protein localises to the cytoplasm. It catalyses the reaction (2R)-3-phosphoglycerate + ATP = (2R)-3-phospho-glyceroyl phosphate + ADP. Its pathway is carbohydrate degradation; glycolysis; pyruvate from D-glyceraldehyde 3-phosphate: step 2/5. This Lactiplantibacillus plantarum (strain ATCC BAA-793 / NCIMB 8826 / WCFS1) (Lactobacillus plantarum) protein is Phosphoglycerate kinase.